We begin with the raw amino-acid sequence, 556 residues long: Man(5)GlcNAc(2)-PP-dolichol translocation protein RFT1 (556 aa).

Helical transmembrane passes span 10-30, 41-61, 91-111, 129-149, 156-176, 184-204, 353-373, 389-409, 440-460, 461-477, 489-509, and 517-537; these read LLGAGFSIIFQILCRILTFGI, EVLGIMNVRLLLLESTLLFLS, LTVPICAVLCAPCLYIWLNWL, VAFSCVLELMAESAVFVAQVF, ILLNTLHILVRSAIFLWIVTG, AFAIAQLSSAVTIVLGQYGFF, SVLNNLLLGVSSIGLIAFTFG, FVAGGLPQSLLQWHCLAIYLL, VSFLVLSYILTGIFGPVGFIF, ANCINMLSRILYSTYYI, LLGLWPGKLFGCTLFLAGIVC, and LATHLGVGVLAGLACLLSWAL.

This sequence belongs to the RFT1 family.

Its subcellular location is the endoplasmic reticulum membrane. It participates in protein modification; protein glycosylation. In terms of biological role, intramembrane glycolipid transporter that operates in the biosynthetic pathway of dolichol-linked oligosaccharides, the glycan precursors employed in protein asparagine (N)-glycosylation. The sequential addition of sugars to dolichol pyrophosphate produces dolichol-linked oligosaccharides containing fourteen sugars, including two GlcNAcs, nine mannoses and three glucoses. Once assembled, the oligosaccharide is transferred from the lipid to nascent proteins by oligosaccharyltransferases. The assembly of dolichol-linked oligosaccharides begins on the cytosolic side of the endoplasmic reticulum membrane and finishes in its lumen. RFT1 could mediate the translocation of the cytosolically oriented intermediate DolPP-GlcNAc2Man5, produced by ALG11, into the ER lumen where dolichol-linked oligosaccharides assembly continues. However, the intramembrane lipid transporter activity could not be confirmed in vitro. This Drosophila melanogaster (Fruit fly) protein is Man(5)GlcNAc(2)-PP-dolichol translocation protein RFT1.